Reading from the N-terminus, the 337-residue chain is 2-oxoglutarate-dependent dioxygenase 19 (337 aa).

Positions 1–25 are disordered; that stretch reads MVAPSRLPSHEEQSAAAAADGSATP. Residues 179-283 form the Fe2OG dioxygenase domain; the sequence is NLESCFQILV…RMSFVSLIGP (105 aa). 3 residues coordinate Fe cation: histidine 208, aspartate 210, and histidine 264. 2-oxoglutarate is bound at residue arginine 274.

The protein belongs to the iron/ascorbate-dependent oxidoreductase family. It depends on Fe(2+) as a cofactor. L-ascorbate serves as cofactor. As to expression, expressed in shoots.

The protein localises to the cytoplasm. It catalyses the reaction melatonin + 2-oxoglutarate + O2 = 2-hydroxymelatonin + succinate + CO2. In terms of biological role, involved in melatonin degradation. Catalyzes the hydroxylation of melatonin to produce 2-hydroxymelatonin. This Oryza sativa subsp. japonica (Rice) protein is 2-oxoglutarate-dependent dioxygenase 19.